The chain runs to 391 residues: Formate-dependent phosphoribosylglycinamide formyltransferase (391 aa).

Residues 20–21 (EL) and E80 contribute to the N(1)-(5-phospho-beta-D-ribosyl)glycinamide site. ATP contacts are provided by residues R112, K153, 158–163 (SSGKGQ), 193–196 (EGFV), and E201. In terms of domain architecture, ATP-grasp spans 117–306 (RLAAEELQLP…EFALHVRAFT (190 aa)). Positions 265 and 277 each coordinate Mg(2+). N(1)-(5-phospho-beta-D-ribosyl)glycinamide-binding positions include D284, K354, and 361–362 (RR).

This sequence belongs to the PurK/PurT family. In terms of assembly, homodimer.

It catalyses the reaction N(1)-(5-phospho-beta-D-ribosyl)glycinamide + formate + ATP = N(2)-formyl-N(1)-(5-phospho-beta-D-ribosyl)glycinamide + ADP + phosphate + H(+). The protein operates within purine metabolism; IMP biosynthesis via de novo pathway; N(2)-formyl-N(1)-(5-phospho-D-ribosyl)glycinamide from N(1)-(5-phospho-D-ribosyl)glycinamide (formate route): step 1/1. Functionally, involved in the de novo purine biosynthesis. Catalyzes the transfer of formate to 5-phospho-ribosyl-glycinamide (GAR), producing 5-phospho-ribosyl-N-formylglycinamide (FGAR). Formate is provided by PurU via hydrolysis of 10-formyl-tetrahydrofolate. This chain is Formate-dependent phosphoribosylglycinamide formyltransferase, found in Aliivibrio fischeri (strain ATCC 700601 / ES114) (Vibrio fischeri).